The chain runs to 177 residues: Dynein light chain Tctex-type 5-A (177 aa).

Belongs to the dynein light chain Tctex-type family.

The polypeptide is Dynein light chain Tctex-type 5-A (Dynlt5-a) (Xenopus laevis (African clawed frog)).